Consider the following 95-residue polypeptide: Co-chaperonin GroES (95 aa).

Belongs to the GroES chaperonin family. In terms of assembly, heptamer of 7 subunits arranged in a ring. Interacts with the chaperonin GroEL.

The protein localises to the cytoplasm. Its function is as follows. Together with the chaperonin GroEL, plays an essential role in assisting protein folding. The GroEL-GroES system forms a nano-cage that allows encapsulation of the non-native substrate proteins and provides a physical environment optimized to promote and accelerate protein folding. GroES binds to the apical surface of the GroEL ring, thereby capping the opening of the GroEL channel. This Stenotrophomonas maltophilia (strain R551-3) protein is Co-chaperonin GroES.